Reading from the N-terminus, the 591-residue chain is Formate--tetrahydrofolate ligase (591 aa).

74–81 (TPLGEGKS) lines the ATP pocket.

This sequence belongs to the formate--tetrahydrofolate ligase family.

The enzyme catalyses (6S)-5,6,7,8-tetrahydrofolate + formate + ATP = (6R)-10-formyltetrahydrofolate + ADP + phosphate. It participates in one-carbon metabolism; tetrahydrofolate interconversion. The sequence is that of Formate--tetrahydrofolate ligase from Desulfovibrio desulfuricans (strain ATCC 27774 / DSM 6949 / MB).